A 568-amino-acid polypeptide reads, in one-letter code: Periplasmic trehalase (568 aa).

Positions 1–38 (MPHAPARSGDAMSAAAPPCCTSLLGLSLSMFVAPCALA) are cleaved as a signal peptide. Substrate-binding positions include arginine 169, 176–177 (WD), asparagine 213, 222–224 (RSQ), 294–296 (RPE), and glycine 327. Active-site proton donor/acceptor residues include aspartate 329 and glutamate 511. Glutamate 526 contributes to the substrate binding site.

Belongs to the glycosyl hydrolase 37 family.

The protein resides in the periplasm. The catalysed reaction is alpha,alpha-trehalose + H2O = alpha-D-glucose + beta-D-glucose. Functionally, provides the cells with the ability to utilize trehalose at high osmolarity by splitting it into glucose molecules that can subsequently be taken up by the phosphotransferase-mediated uptake system. The protein is Periplasmic trehalase of Xanthomonas campestris pv. campestris (strain B100).